Consider the following 451-residue polypeptide: Exodeoxyribonuclease 7 large subunit (451 aa).

This sequence belongs to the XseA family. In terms of assembly, heterooligomer composed of large and small subunits.

Its subcellular location is the cytoplasm. The enzyme catalyses Exonucleolytic cleavage in either 5'- to 3'- or 3'- to 5'-direction to yield nucleoside 5'-phosphates.. Functionally, bidirectionally degrades single-stranded DNA into large acid-insoluble oligonucleotides, which are then degraded further into small acid-soluble oligonucleotides. In Neisseria gonorrhoeae (strain ATCC 700825 / FA 1090), this protein is Exodeoxyribonuclease 7 large subunit.